The chain runs to 98 residues: NADH-ubiquinone oxidoreductase chain 4L (98 aa).

A run of 3 helical transmembrane segments spans residues 2 to 22 (TLTTMNILLAFFFSLLGTLIF), 29 to 49 (TLLCLEGMMLSLFIMTTITAL), and 61 to 81 (ITTLVFAACEAAVGLALLTMV).

The protein belongs to the complex I subunit 4L family. As to quaternary structure, core subunit of respiratory chain NADH dehydrogenase (Complex I) which is composed of 45 different subunits.

It localises to the mitochondrion inner membrane. It catalyses the reaction a ubiquinone + NADH + 5 H(+)(in) = a ubiquinol + NAD(+) + 4 H(+)(out). Functionally, core subunit of the mitochondrial membrane respiratory chain NADH dehydrogenase (Complex I) which catalyzes electron transfer from NADH through the respiratory chain, using ubiquinone as an electron acceptor. Part of the enzyme membrane arm which is embedded in the lipid bilayer and involved in proton translocation. This Oxymycterus rufus (Red hocicudo) protein is NADH-ubiquinone oxidoreductase chain 4L (MT-ND4L).